A 202-amino-acid polypeptide reads, in one-letter code: Dephospho-CoA kinase (202 aa).

The region spanning 6-202 (KVSITGDLSS…EYFYALKGAL (197 aa)) is the DPCK domain. 14–19 (SSGKTE) provides a ligand contact to ATP.

Belongs to the CoaE family.

The protein resides in the cytoplasm. It carries out the reaction 3'-dephospho-CoA + ATP = ADP + CoA + H(+). It participates in cofactor biosynthesis; coenzyme A biosynthesis; CoA from (R)-pantothenate: step 5/5. Functionally, catalyzes the phosphorylation of the 3'-hydroxyl group of dephosphocoenzyme A to form coenzyme A. The protein is Dephospho-CoA kinase of Chlamydia caviae (strain ATCC VR-813 / DSM 19441 / 03DC25 / GPIC) (Chlamydophila caviae).